The chain runs to 362 residues: Peptide chain release factor 1 (362 aa).

The residue at position 240 (Gln-240) is an N5-methylglutamine.

Belongs to the prokaryotic/mitochondrial release factor family. Post-translationally, methylated by PrmC. Methylation increases the termination efficiency of RF1.

It localises to the cytoplasm. Its function is as follows. Peptide chain release factor 1 directs the termination of translation in response to the peptide chain termination codons UAG and UAA. In Bifidobacterium adolescentis (strain ATCC 15703 / DSM 20083 / NCTC 11814 / E194a), this protein is Peptide chain release factor 1.